The chain runs to 124 residues: Small ribosomal subunit protein uS12 (124 aa).

Aspartate 89 is subject to 3-methylthioaspartic acid.

It belongs to the universal ribosomal protein uS12 family. As to quaternary structure, part of the 30S ribosomal subunit. Contacts proteins S8 and S17. May interact with IF1 in the 30S initiation complex.

Its function is as follows. With S4 and S5 plays an important role in translational accuracy. Interacts with and stabilizes bases of the 16S rRNA that are involved in tRNA selection in the A site and with the mRNA backbone. Located at the interface of the 30S and 50S subunits, it traverses the body of the 30S subunit contacting proteins on the other side and probably holding the rRNA structure together. The combined cluster of proteins S8, S12 and S17 appears to hold together the shoulder and platform of the 30S subunit. The polypeptide is Small ribosomal subunit protein uS12 (Acinetobacter baumannii (strain AB307-0294)).